The primary structure comprises 897 residues: Probable basic-leucine zipper transcription factor R (897 aa).

Disordered stretches follow at residues aspartate 38–threonine 88 and tyrosine 128–serine 198. Positions asparagine 44–asparagine 75 are enriched in low complexity. A compositionally biased stretch (polar residues) spans isoleucine 76–threonine 88. The stretch at glutamine 94–aspartate 137 forms a coiled coil. Over residues tyrosine 128–glutamine 140 the composition is skewed to low complexity. Over residues lysine 141 to threonine 157 the composition is skewed to polar residues. Low complexity predominate over residues asparagine 158–serine 198. Coiled coils occupy residues leucine 228–glutamine 258 and glutamine 330–glutamine 407. Positions leucine 461 to glutamine 516 are disordered. Pro residues predominate over residues isoleucine 484–glutamine 505. Low complexity predominate over residues glutamine 506–glutamine 516. Residues glutamate 557 to glutamate 620 enclose the bZIP domain. The segment at lysine 559–lysine 564 is basic motif. The interval isoleucine 569 to leucine 576 is leucine-zipper.

Belongs to the bZIP family.

It is found in the nucleus. Functionally, probable transcriptional regulator. The polypeptide is Probable basic-leucine zipper transcription factor R (bzpR) (Dictyostelium discoideum (Social amoeba)).